The following is a 654-amino-acid chain: tRNA 5-methylaminomethyl-2-thiouridine biosynthesis bifunctional protein MnmC (654 aa).

Residues 1–235 (MSDFQHAQLD…KREMLGGTYQ (235 aa)) are tRNA (mnm(5)s(2)U34)-methyltransferase. The tract at residues 261–654 (VGGGLAGCAS…LRDLVRGQRG (394 aa)) is FAD-dependent cmnm(5)s(2)U34 oxidoreductase.

The protein in the N-terminal section; belongs to the methyltransferase superfamily. tRNA (mnm(5)s(2)U34)-methyltransferase family. In the C-terminal section; belongs to the DAO family. FAD serves as cofactor.

It is found in the cytoplasm. The enzyme catalyses 5-aminomethyl-2-thiouridine(34) in tRNA + S-adenosyl-L-methionine = 5-methylaminomethyl-2-thiouridine(34) in tRNA + S-adenosyl-L-homocysteine + H(+). In terms of biological role, catalyzes the last two steps in the biosynthesis of 5-methylaminomethyl-2-thiouridine (mnm(5)s(2)U) at the wobble position (U34) in tRNA. Catalyzes the FAD-dependent demodification of cmnm(5)s(2)U34 to nm(5)s(2)U34, followed by the transfer of a methyl group from S-adenosyl-L-methionine to nm(5)s(2)U34, to form mnm(5)s(2)U34. This Pseudomonas paraeruginosa (strain DSM 24068 / PA7) (Pseudomonas aeruginosa (strain PA7)) protein is tRNA 5-methylaminomethyl-2-thiouridine biosynthesis bifunctional protein MnmC.